The primary structure comprises 500 residues: Trehalose-6-phosphate synthase (500 aa).

Position 28 (Arg28) interacts with D-glucose 6-phosphate. 48–49 is a binding site for UDP-alpha-D-glucose; that stretch reads GG. D-glucose 6-phosphate contacts are provided by Tyr108 and Asp162. UDP-alpha-D-glucose contacts are provided by Arg304 and Lys309. Arg342 is a binding site for D-glucose 6-phosphate. 407-411 is a UDP-alpha-D-glucose binding site; sequence LVAKE.

This sequence belongs to the glycosyltransferase 20 family. As to quaternary structure, homotetramer.

The enzyme catalyses ADP-alpha-D-glucose + D-glucose 6-phosphate = alpha,alpha-trehalose 6-phosphate + ADP + H(+). It catalyses the reaction CDP-alpha-D-glucose + D-glucose 6-phosphate = alpha,alpha-trehalose 6-phosphate + CDP + H(+). The catalysed reaction is GDP-alpha-D-glucose + D-glucose 6-phosphate = alpha,alpha-trehalose 6-phosphate + GDP + H(+). It carries out the reaction TDP-alpha-D-glucose + D-glucose 6-phosphate = 5-methyl-UDP + alpha,alpha-trehalose 6-phosphate + H(+). The enzyme catalyses D-glucose 6-phosphate + UDP-alpha-D-glucose = alpha,alpha-trehalose 6-phosphate + UDP + H(+). It participates in glycan biosynthesis; trehalose biosynthesis. Functionally, probably involved in the osmoprotection via the biosynthesis of trehalose and in the production of glycogen and alpha-glucan via the TreS-Pep2 branch involved in the biosynthesis of maltose-1-phosphate (M1P). Catalyzes the transfer of glucose from UDP-glucose (UDP-Glc) to D-glucose 6-phosphate (Glc-6-P) to form trehalose-6-phosphate. Probably also able to use ADP-Glc, CDP-Glc, GDP-Glc and TDP-Glc as glucosyl donors. This is Trehalose-6-phosphate synthase from Mycobacterium bovis (strain ATCC BAA-935 / AF2122/97).